A 542-amino-acid chain; its full sequence is Cytochrome P450 monooxygenase 91 (542 aa).

A signal peptide spans 1–22 (MLDILRFVLICGILWILRRVLL). 2 N-linked (GlcNAc...) asparagine glycosylation sites follow: N299 and N392. C482 provides a ligand contact to heme.

This sequence belongs to the cytochrome P450 family. The cofactor is heme.

It participates in secondary metabolite biosynthesis. In terms of biological role, cytochrome P450 monooxygenase that is able to use dehydroabietic acid as a substrate for oxidation. This Postia placenta (strain ATCC 44394 / Madison 698-R) (Brown rot fungus) protein is Cytochrome P450 monooxygenase 91.